The following is a 105-amino-acid chain: Translation initiation factor 1A (105 aa).

In terms of domain architecture, S1-like spans 18–92 (IRVKLPNKRI…DKCDIIYRYT (75 aa)).

This sequence belongs to the eIF-1A family.

Its function is as follows. Seems to be required for maximal rate of protein biosynthesis. Enhances ribosome dissociation into subunits and stabilizes the binding of the initiator Met-tRNA(I) to 40 S ribosomal subunits. The sequence is that of Translation initiation factor 1A (eIF1A) from Methanocorpusculum labreanum (strain ATCC 43576 / DSM 4855 / Z).